Here is a 26-residue protein sequence, read N- to C-terminus: Guentherin (26 aa).

As to expression, expressed by the skin glands.

It localises to the secreted. Antimicrobial peptide. Active against the Gram-positive bacteria S.aureus FDA209P (MIC=35.5 ug/ml) and B.subtilis ATCC 6633 (MIC&gt;64 ug/ml), but not active against the Gram-negative bacterium E.coli or the fungus C.albicans. The protein is Guentherin of Sylvirana guentheri (Gunther's frog).